A 192-amino-acid chain; its full sequence is Transmembrane protein 11, mitochondrial (192 aa).

Residues 1 to 20 (MAAWGRRRLGPGSSGGSARE) are disordered. Helical transmembrane passes span 84 to 100 (TAVLAGTACLFTPLALP) and 107 to 124 (ISLPAGVLSLACCTLYGI).

Belongs to the TMEM11 family. In terms of assembly, associates with the mitochondrial contact site and cristae organizing system (MICOS) complex, composed of at least MICOS10/MIC10, CHCHD3/MIC19, CHCHD6/MIC25, APOOL/MIC27, IMMT/MIC60, APOO/MIC23/MIC26 and QIL1/MIC13. This complex was also known under the names MINOS or MitOS complex. The MICOS complex associates with mitochondrial outer membrane proteins SAMM50, MTX1, MTX2 and DNAJC11, mitochondrial inner membrane protein TMEM11 and with HSPA9. Interacts with IMMT/MIC60.

It localises to the mitochondrion inner membrane. Functionally, plays a role in mitochondrial morphogenesis. The chain is Transmembrane protein 11, mitochondrial (TMEM11) from Homo sapiens (Human).